The primary structure comprises 349 residues: Small ribosomal subunit protein uS2 (349 aa).

A disordered region spans residues 302–334 (QNNYDPSKRGYNPKYVNHKSTFNKFNNKKPVDS).

It belongs to the universal ribosomal protein uS2 family.

This is Small ribosomal subunit protein uS2 from Ureaplasma parvum serovar 3 (strain ATCC 27815 / 27 / NCTC 11736).